A 332-amino-acid chain; its full sequence is 4-hydroxy-3-methylbut-2-enyl diphosphate reductase (332 aa).

Cysteine 13 is a binding site for [4Fe-4S] cluster. Residues histidine 41 and histidine 75 each coordinate (2E)-4-hydroxy-3-methylbut-2-enyl diphosphate. The dimethylallyl diphosphate site is built by histidine 41 and histidine 75. The isopentenyl diphosphate site is built by histidine 41 and histidine 75. Cysteine 97 contacts [4Fe-4S] cluster. Residue histidine 125 coordinates (2E)-4-hydroxy-3-methylbut-2-enyl diphosphate. Position 125 (histidine 125) interacts with dimethylallyl diphosphate. Histidine 125 contacts isopentenyl diphosphate. Residue glutamate 127 is the Proton donor of the active site. Threonine 168 provides a ligand contact to (2E)-4-hydroxy-3-methylbut-2-enyl diphosphate. Cysteine 229 is a binding site for [4Fe-4S] cluster. Residues serine 257, serine 258, asparagine 259, and serine 306 each coordinate (2E)-4-hydroxy-3-methylbut-2-enyl diphosphate. Dimethylallyl diphosphate-binding residues include serine 257, serine 258, asparagine 259, and serine 306. The isopentenyl diphosphate site is built by serine 257, serine 258, asparagine 259, and serine 306.

The protein belongs to the IspH family. It depends on [4Fe-4S] cluster as a cofactor.

It carries out the reaction isopentenyl diphosphate + 2 oxidized [2Fe-2S]-[ferredoxin] + H2O = (2E)-4-hydroxy-3-methylbut-2-enyl diphosphate + 2 reduced [2Fe-2S]-[ferredoxin] + 2 H(+). The catalysed reaction is dimethylallyl diphosphate + 2 oxidized [2Fe-2S]-[ferredoxin] + H2O = (2E)-4-hydroxy-3-methylbut-2-enyl diphosphate + 2 reduced [2Fe-2S]-[ferredoxin] + 2 H(+). The protein operates within isoprenoid biosynthesis; dimethylallyl diphosphate biosynthesis; dimethylallyl diphosphate from (2E)-4-hydroxy-3-methylbutenyl diphosphate: step 1/1. It participates in isoprenoid biosynthesis; isopentenyl diphosphate biosynthesis via DXP pathway; isopentenyl diphosphate from 1-deoxy-D-xylulose 5-phosphate: step 6/6. Catalyzes the conversion of 1-hydroxy-2-methyl-2-(E)-butenyl 4-diphosphate (HMBPP) into a mixture of isopentenyl diphosphate (IPP) and dimethylallyl diphosphate (DMAPP). Acts in the terminal step of the DOXP/MEP pathway for isoprenoid precursor biosynthesis. This is 4-hydroxy-3-methylbut-2-enyl diphosphate reductase from Chlorobaculum parvum (strain DSM 263 / NCIMB 8327) (Chlorobium vibrioforme subsp. thiosulfatophilum).